The primary structure comprises 313 residues: WD repeat-containing protein 82-A (313 aa).

WD repeat units follow at residues E19–T58, G105–L144, H146–F184, D192–T231, N236–V276, and K280–D313.

This sequence belongs to the WD repeat SWD2 family. In terms of assembly, component of the SET1/COMPASS complex. Component of the PNUTS-PP1 phosphatase complex.

Its subcellular location is the nucleus. The protein localises to the chromosome. It localises to the cytoplasm. Its function is as follows. Regulatory component of the SET1/COMPASS complex implicated in the tethering of this complex to transcriptional start sites of active genes. Facilitates histone H3 'Lys-4' methylation (H3K4me) via recruitment of the SETD1A or SETD1B to the 'Ser-5' phosphorylated C-terminal domain (CTD) of RNA polymerase II large subunit (POLR2A). Component of the PNUTS-PP1 protein phosphatase complex, a protein phosphatase 1 (PP1) complex that promotes RNA polymerase II transcription pause-release, allowing transcription elongation. This is WD repeat-containing protein 82-A (wdr82-a) from Xenopus laevis (African clawed frog).